Consider the following 28-residue polypeptide: Ranatuerin-2AVb (28 aa).

A disulfide bridge connects residues C23 and C28.

In terms of tissue distribution, expressed by the skin glands.

It localises to the secreted. In terms of biological role, has antibacterial activity. In Rana arvalis (Moor frog), this protein is Ranatuerin-2AVb.